A 126-amino-acid chain; its full sequence is Large-conductance mechanosensitive channel (126 aa).

2 helical membrane-spanning segments follow: residues 17-37 (VDLA…SSFI) and 70-90 (GLFL…FLII).

It belongs to the MscL family. In terms of assembly, homopentamer.

It localises to the cell inner membrane. Channel that opens in response to stretch forces in the membrane lipid bilayer. May participate in the regulation of osmotic pressure changes within the cell. The sequence is that of Large-conductance mechanosensitive channel from Flavobacterium johnsoniae (strain ATCC 17061 / DSM 2064 / JCM 8514 / BCRC 14874 / CCUG 350202 / NBRC 14942 / NCIMB 11054 / UW101) (Cytophaga johnsonae).